A 166-amino-acid chain; its full sequence is Large ribosomal subunit protein uL10 (166 aa).

It belongs to the universal ribosomal protein uL10 family. Part of the ribosomal stalk of the 50S ribosomal subunit. The N-terminus interacts with L11 and the large rRNA to form the base of the stalk. The C-terminus forms an elongated spine to which L12 dimers bind in a sequential fashion forming a multimeric L10(L12)X complex.

In terms of biological role, forms part of the ribosomal stalk, playing a central role in the interaction of the ribosome with GTP-bound translation factors. The sequence is that of Large ribosomal subunit protein uL10 from Neisseria gonorrhoeae (strain ATCC 700825 / FA 1090).